We begin with the raw amino-acid sequence, 320 residues long: MDHPSTSSLPRKKVKAGVKKAGKKTGKKTTGKKKTTPSAIGNRKGKGAACLLVLLAVLSYLAALSLGLYIMTGCISTTAQSNNIYLAELSTNTTYDMSLRVGYFGGCVSVTELTEAPYTGRNSSTQTSTHCVSNLRRKNLDDLSEDLWEPLKLNSSTIQSSLQTFFNTTLPQAKHLQENVFFCEPPLVHLLLFFVTGIMLFVAMTGTSRKRSYRAMLVTAIALSAFSLALALVTVLGSLQSMNALLNTSASGAQRALGDSLYISRGKAMLGVQGALVAIVAVFYLTMGVVFVRRTPEGGAGYIIQAFQNVRGPLKRMGRR.

The disordered stretch occupies residues 1 to 40 (MDHPSTSSLPRKKVKAGVKKAGKKTGKKTTGKKKTTPSAI). A compositionally biased stretch (basic residues) spans 10–35 (PRKKVKAGVKKAGKKTGKKTTGKKKT). A helical transmembrane segment spans residues 51-71 (LLVLLAVLSYLAALSLGLYIM). Asn92, Asn122, Asn154, and Asn167 each carry an N-linked (GlcNAc...) asparagine glycan. Helical transmembrane passes span 186–206 (PLVH…AMTG) and 216–236 (MLVT…VTVL). Asn247 is a glycosylation site (N-linked (GlcNAc...) asparagine). A helical transmembrane segment spans residues 272–292 (VQGALVAIVAVFYLTMGVVFV).

The protein localises to the membrane. The protein operates within secondary metabolite biosynthesis; terpenoid biosynthesis. In terms of biological role, part of the gene cluster that mediates the biosynthesis of an ophiobolin family sesterterpenoid. This is an uncharacterized protein from Aspergillus terreus.